The chain runs to 493 residues: 3-octaprenyl-4-hydroxybenzoate carboxy-lyase (493 aa).

N172 lines the Mn(2+) pocket. Prenylated FMN contacts are provided by residues 175 to 177, 189 to 191, and 194 to 195; these read IYR, RWL, and RG. Residue E238 coordinates Mn(2+). D287 acts as the Proton donor in catalysis.

This sequence belongs to the UbiD family. Homohexamer. Prenylated FMN serves as cofactor. Mn(2+) is required as a cofactor.

Its subcellular location is the cell membrane. It carries out the reaction a 4-hydroxy-3-(all-trans-polyprenyl)benzoate + H(+) = a 2-(all-trans-polyprenyl)phenol + CO2. The protein operates within cofactor biosynthesis; ubiquinone biosynthesis. In terms of biological role, catalyzes the decarboxylation of 3-octaprenyl-4-hydroxy benzoate to 2-octaprenylphenol, an intermediate step in ubiquinone biosynthesis. The polypeptide is 3-octaprenyl-4-hydroxybenzoate carboxy-lyase (Shewanella pealeana (strain ATCC 700345 / ANG-SQ1)).